The sequence spans 544 residues: Matrilin-1 (544 aa).

The signal sequence occupies residues 1–26; that stretch reads MRALSGPRLMLCGLLLLLFQAPCALG. The VWFA 1 domain occupies 42–217; the sequence is DLVFVVDSSR…SVIEKLSKKF (176 aa). Asn-77 carries N-linked (GlcNAc...) asparagine glycosylation. The region spanning 224–264 is the EGF-like domain; the sequence is VSDLCATGDHDCEQVCVSSPGSYTCACREGFTLNSDGKTCN. 3 disulfide bridges follow: Cys-228–Cys-239, Cys-235–Cys-248, and Cys-250–Cys-263. One can recognise a VWFA 2 domain in the interval 276–448; sequence DLVFLIDGSK…KTINQIGKKL (173 aa). Asn-345 carries N-linked (GlcNAc...) asparagine glycosylation.

In terms of assembly, homotrimer. Part of a complex composed of MATN1 (via VWFA1 domain), type 2 collagens and type 6 collagens. Forms a complex (via covalent bonds) with ACAN; the interaction increases in abundance with increasing age of the organism via an increase in occupancy of MATN1 binding sites. Interacts with COMP. In terms of processing, N-glycosylated; reduces binding affinity for type 2 collagens. As to expression, expressed in trachea from fetus into adulthood (at protein level).

Its subcellular location is the secreted. It is found in the extracellular space. It localises to the extracellular matrix. A major component of the extracellular matrix of non-articular cartilage. Binds to type 2 collagens and forms long concatenated protein networks as part of the extracellular matrix. Required for the network-like organization and bundling of collagen fibrils surrounding chondrocytes in the zones of maturation and hypertrophy. Required for mechanotransduction and adaption to mechanical loading in cartilage chondrocytes, resulting in an increase in expression of the extracellular matrix components ACAN and COL2A1. Acts as a moderator of angiogenesis in response to injury. This chain is Matrilin-1, found in Bos taurus (Bovine).